A 153-amino-acid chain; its full sequence is Gastric inhibitory polypeptide (153 aa).

A signal peptide spans 1–21 (MVATKTFALLLLSLFLAVGLG). 2 propeptides span residues 22–50 (EKKE…PRGP) and 95–153 (EARA…LRSR). A disordered region spans residues 102-125 (ASQANRKEEEAVEPQSSPAKNPSD).

Belongs to the glucagon family.

Its subcellular location is the secreted. Its function is as follows. Potent stimulator of insulin secretion and relatively poor inhibitor of gastric acid secretion. The protein is Gastric inhibitory polypeptide (GIP) of Homo sapiens (Human).